The sequence spans 361 residues: Phospho-N-acetylmuramoyl-pentapeptide-transferase (361 aa).

10 helical membrane-spanning segments follow: residues 25–45 (RAVL…PWVI), 73–93 (TMGG…WADL), 97–117 (YVWL…YDDW), 134–154 (MFWQ…TASL), 168–188 (VIYP…IVGT), 200–220 (GLAA…AYVA), 240–260 (VAVF…FNAY), 264–284 (VFMG…VAVI), 289–309 (IVLF…MIQV), and 338–358 (QVVV…LSTL).

Belongs to the glycosyltransferase 4 family. MraY subfamily. Mg(2+) serves as cofactor.

The protein resides in the cell inner membrane. It carries out the reaction UDP-N-acetyl-alpha-D-muramoyl-L-alanyl-gamma-D-glutamyl-meso-2,6-diaminopimeloyl-D-alanyl-D-alanine + di-trans,octa-cis-undecaprenyl phosphate = di-trans,octa-cis-undecaprenyl diphospho-N-acetyl-alpha-D-muramoyl-L-alanyl-D-glutamyl-meso-2,6-diaminopimeloyl-D-alanyl-D-alanine + UMP. Its pathway is cell wall biogenesis; peptidoglycan biosynthesis. Catalyzes the initial step of the lipid cycle reactions in the biosynthesis of the cell wall peptidoglycan: transfers peptidoglycan precursor phospho-MurNAc-pentapeptide from UDP-MurNAc-pentapeptide onto the lipid carrier undecaprenyl phosphate, yielding undecaprenyl-pyrophosphoryl-MurNAc-pentapeptide, known as lipid I. The protein is Phospho-N-acetylmuramoyl-pentapeptide-transferase of Laribacter hongkongensis (strain HLHK9).